The following is a 155-amino-acid chain: SsrA-binding protein (155 aa).

Belongs to the SmpB family.

Its subcellular location is the cytoplasm. In terms of biological role, required for rescue of stalled ribosomes mediated by trans-translation. Binds to transfer-messenger RNA (tmRNA), required for stable association of tmRNA with ribosomes. tmRNA and SmpB together mimic tRNA shape, replacing the anticodon stem-loop with SmpB. tmRNA is encoded by the ssrA gene; the 2 termini fold to resemble tRNA(Ala) and it encodes a 'tag peptide', a short internal open reading frame. During trans-translation Ala-aminoacylated tmRNA acts like a tRNA, entering the A-site of stalled ribosomes, displacing the stalled mRNA. The ribosome then switches to translate the ORF on the tmRNA; the nascent peptide is terminated with the 'tag peptide' encoded by the tmRNA and targeted for degradation. The ribosome is freed to recommence translation, which seems to be the essential function of trans-translation. The protein is SsrA-binding protein of Streptococcus pneumoniae (strain 70585).